We begin with the raw amino-acid sequence, 315 residues long: Olfactory receptor 2V1 (315 aa).

The Extracellular segment spans residues 1–31 (MGRWVNQSYTDGFFLLGIFSHSQTDLVLFSA). N-linked (GlcNAc...) asparagine glycosylation is present at N6. The helical transmembrane segment at 32–52 (VMVVFTVALCGNVLLIFLIYL) threads the bilayer. Residues 53 to 58 (DAGLHT) are Cytoplasmic-facing. The chain crosses the membrane as a helical span at residues 59-79 (PMYFFLSQLSLMDLMLVCNIV). Residues 80 to 99 (PKMAANFLSGRKSISFVGCG) are Extracellular-facing. C98 and C180 are disulfide-bonded. A helical transmembrane segment spans residues 100–120 (IQIGFFVSLVGSEGLLLGLMA). Residues 121 to 149 (YDRYVAVSHPLHYPILMNQRVCLQITGSS) are Cytoplasmic-facing. A helical transmembrane segment spans residues 150-170 (WAFGIIDGVIQMVAAMGLPYC). The Extracellular segment spans residues 171–198 (GSRSVDHFFCEVQALLKLACADTSLFDT). The helical transmembrane segment at 199–219 (LLFACCVFMLLLPFSIIMASY) threads the bilayer. Residues 220 to 238 (ACILGAVLRIRSAQAWKKA) are Cytoplasmic-facing. Residues 239 to 259 (LATCSSHLTAVTLFYGAAMFM) traverse the membrane as a helical segment. Over 260 to 272 (YLRPRRYRAPSHD) the chain is Extracellular. Residues 273–293 (KVASIFYTVLTPMLNPLIYSL) traverse the membrane as a helical segment. The Cytoplasmic segment spans residues 294-315 (RNGEVMGALRKGLDRCRIGSQH).

It belongs to the G-protein coupled receptor 1 family.

The protein localises to the cell membrane. In terms of biological role, odorant receptor. This chain is Olfactory receptor 2V1 (OR2V1), found in Homo sapiens (Human).